The following is a 276-amino-acid chain: Digeranylgeranylglyceryl phosphate synthase (276 aa).

Transmembrane regions (helical) follow at residues Pro12–Pro34, Ile38–Phe60, Ala84–Leu104, Phe107–Leu127, Gly146–Val166, Val202–Val222, Val224–Leu244, and Gln256–Met276.

It belongs to the UbiA prenyltransferase family. DGGGP synthase subfamily. It depends on Mg(2+) as a cofactor.

Its subcellular location is the cell membrane. It catalyses the reaction sn-3-O-(geranylgeranyl)glycerol 1-phosphate + (2E,6E,10E)-geranylgeranyl diphosphate = 2,3-bis-O-(geranylgeranyl)-sn-glycerol 1-phosphate + diphosphate. It participates in membrane lipid metabolism; glycerophospholipid metabolism. In terms of biological role, prenyltransferase that catalyzes the transfer of the geranylgeranyl moiety of geranylgeranyl diphosphate (GGPP) to the C2 hydroxyl of (S)-3-O-geranylgeranylglyceryl phosphate (GGGP). This reaction is the second ether-bond-formation step in the biosynthesis of archaeal membrane lipids. The chain is Digeranylgeranylglyceryl phosphate synthase from Thermococcus gammatolerans (strain DSM 15229 / JCM 11827 / EJ3).